The chain runs to 385 residues: Succinate--CoA ligase [ADP-forming] subunit beta (385 aa).

The 232-residue stretch at 9–240 (KEIFAKYGIP…ETQLPQLEVE (232 aa)) folds into the ATP-grasp domain. ATP-binding positions include Lys46, 53–55 (GRG), Glu98, Thr101, and Glu106. Residues Asn195 and Asp209 each coordinate Mg(2+). Substrate-binding positions include Asn260 and 317–319 (GIL).

The protein belongs to the succinate/malate CoA ligase beta subunit family. As to quaternary structure, heterotetramer of two alpha and two beta subunits. The cofactor is Mg(2+).

The catalysed reaction is succinate + ATP + CoA = succinyl-CoA + ADP + phosphate. It carries out the reaction GTP + succinate + CoA = succinyl-CoA + GDP + phosphate. It functions in the pathway carbohydrate metabolism; tricarboxylic acid cycle; succinate from succinyl-CoA (ligase route): step 1/1. Succinyl-CoA synthetase functions in the citric acid cycle (TCA), coupling the hydrolysis of succinyl-CoA to the synthesis of either ATP or GTP and thus represents the only step of substrate-level phosphorylation in the TCA. The beta subunit provides nucleotide specificity of the enzyme and binds the substrate succinate, while the binding sites for coenzyme A and phosphate are found in the alpha subunit. The protein is Succinate--CoA ligase [ADP-forming] subunit beta of Aquifex aeolicus (strain VF5).